A 935-amino-acid polypeptide reads, in one-letter code: Protocadherin gamma-A11 (935 aa).

Residues M1–A29 form the signal peptide. Cadherin domains lie at R30–F134, Q135–F243, T244–I348, T349–F453, P454–I563, and D571–G677. Topologically, residues R30 to Y693 are extracellular. An N-linked (GlcNAc...) asparagine glycan is attached at N48. Residues N255, N266, N420, and N546 are each glycosylated (N-linked (GlcNAc...) asparagine). Residues L694–A714 traverse the membrane as a helical segment. The Cytoplasmic segment spans residues L715–K935. 2 disordered regions span residues C805–N844 and A905–K935. Residues P807–N844 show a composition bias toward polar residues. Positions N925–K935 are enriched in basic residues.

Its subcellular location is the cell membrane. In terms of biological role, potential calcium-dependent cell-adhesion protein. May be involved in the establishment and maintenance of specific neuronal connections in the brain. The protein is Protocadherin gamma-A11 (PCDHGA11) of Pan troglodytes (Chimpanzee).